The primary structure comprises 265 residues: Selenoprotein Pb (265 aa).

A signal peptide spans 1–18 (MQALWPLLLSALPALLGA). N-linked (GlcNAc...) asparagine glycosylation occurs at Asn-28. Position 64 (Sec-64) is a non-standard amino acid, selenocysteine. Residues Asn-88, Asn-178, Asn-184, and Asn-207 are each glycosylated (N-linked (GlcNAc...) asparagine). The tract at residues 188–265 (SESSDSTKND…SHQEHVHNHR (78 aa)) is disordered. A compositionally biased stretch (polar residues) spans 201–211 (ENNQRPNSTEP). Residues 215–231 (AHHHHHQQHEPHHHHHN) show a composition bias toward basic residues. Basic and acidic residues predominate over residues 239 to 265 (KSGDSDVTGKPKEPPHHSHQEHVHNHR).

The protein resides in the secreted. Functionally, might be responsible for some of the extracellular antioxidant defense properties of selenium. This Danio rerio (Zebrafish) protein is Selenoprotein Pb (sepp1b).